The primary structure comprises 424 residues: 3-ketoacyl-CoA thiolase B, peroxisomal (424 aa).

A peroxisome-targeting transit peptide spans 1 to 26 (MHRLQVVLGHLAGRSESSSALQAAPC). Residues 1–26 (MHRLQVVLGHLAGRSESSSALQAAPC) are PTS2-type peroxisomal targeting signal. Residue Cys123 is the Acyl-thioester intermediate of the active site. 2 positions are modified to N6-acetyllysine: Lys173 and Lys234. Residues Arg249, Thr252, and Ser276 each contribute to the CoA site. Cys408 (proton donor/acceptor) is an active-site residue.

Belongs to the thiolase-like superfamily. Thiolase family. As to quaternary structure, homodimer. Interacts (via PTS2-type peroxisomal targeting signal region) with PEX7; leading to its translocation into peroxisomes.

It is found in the peroxisome. It carries out the reaction an acyl-CoA + acetyl-CoA = a 3-oxoacyl-CoA + CoA. It catalyses the reaction 2 acetyl-CoA = acetoacetyl-CoA + CoA. The catalysed reaction is hexanoyl-CoA + acetyl-CoA = 3-oxooctanoyl-CoA + CoA. The enzyme catalyses tetradecanoyl-CoA + acetyl-CoA = 3-oxohexadecanoyl-CoA + CoA. It carries out the reaction 3-oxohexadecanedioyl-CoA + CoA = tetradecanedioyl-CoA + acetyl-CoA. It catalyses the reaction 3-oxo-(6Z,9Z,12Z,15Z,18Z,21Z)-tetracosahexaenoyl-CoA + CoA = (4Z,7Z,10Z,13Z,16Z,19Z)-docosahexaenoyl-CoA + acetyl-CoA. The protein operates within lipid metabolism; peroxisomal fatty acid beta-oxidation. Its function is as follows. Responsible for the thiolytic cleavage of straight chain 3-keto fatty acyl-CoAs (3-oxoacyl-CoAs). Plays an important role in fatty acid peroxisomal beta-oxidation. Catalyzes the cleavage of short, medium, long, and very long straight chain 3-oxoacyl-CoAs. Medium chain straight 3-oxoacyl-CoAs are preferred substrates. This is 3-ketoacyl-CoA thiolase B, peroxisomal from Rattus norvegicus (Rat).